The primary structure comprises 775 residues: Mitochondrial intermediate peptidase (775 aa).

The transit peptide at Met1–His28 directs the protein to the mitochondrion. Position 558 (His558) interacts with Zn(2+). Residue Glu559 is part of the active site. Zn(2+)-binding residues include His562 and His565.

Belongs to the peptidase M3 family. Zn(2+) is required as a cofactor.

It localises to the mitochondrion matrix. It carries out the reaction Release of an N-terminal octapeptide as second stage of processing of some proteins imported into the mitochondrion.. Cleaves proteins, imported into the mitochondrion, to their mature size. While most mitochondrial precursor proteins are processed to the mature form in one step by mitochondrial processing peptidase (MPP), the sequential cleavage by MIP of an octapeptide after initial processing by MPP is a required step for a subgroup of nuclear-encoded precursor proteins destined for the matrix or the inner membrane. The sequence is that of Mitochondrial intermediate peptidase (OCT1) from Schizophyllum commune (Split gill fungus).